Consider the following 514-residue polypeptide: L-Threonine dehydratase biosynthetic IlvA (514 aa).

Position 62 is an N6-(pyridoxal phosphate)lysine (Lys-62). Pyridoxal 5'-phosphate is bound by residues Asn-89, 188–192 (GGGGL), and Ser-315. 2 consecutive ACT-like domains span residues 339–411 (ALLA…DLSD) and 434–504 (RLYS…DESN).

This sequence belongs to the serine/threonine dehydratase family. Homotetramer. Pyridoxal 5'-phosphate serves as cofactor.

The catalysed reaction is L-threonine = 2-oxobutanoate + NH4(+). The protein operates within amino-acid biosynthesis; L-isoleucine biosynthesis; 2-oxobutanoate from L-threonine: step 1/1. Its activity is regulated as follows. Isoleucine allosterically inhibits whereas valine allosterically activates this enzyme. Functionally, catalyzes the anaerobic formation of alpha-ketobutyrate and ammonia from threonine in a two-step reaction. The first step involved a dehydration of threonine and a production of enamine intermediates (aminocrotonate), which tautomerizes to its imine form (iminobutyrate). Both intermediates are unstable and short-lived. The second step is the nonenzymatic hydrolysis of the enamine/imine intermediates to form 2-ketobutyrate and free ammonia. In the low water environment of the cell, the second step is accelerated by RidA. In Salmonella typhimurium (strain LT2 / SGSC1412 / ATCC 700720), this protein is L-Threonine dehydratase biosynthetic IlvA (ilvA).